The primary structure comprises 355 residues: DNA polymerase IV (355 aa).

Positions 7–188 (IIHIDMDCFY…LPVRKLFGVG (182 aa)) constitute a UmuC domain. Residues Asp-11 and Asp-106 each contribute to the Mg(2+) site. The active site involves Glu-107.

It belongs to the DNA polymerase type-Y family. As to quaternary structure, monomer. Mg(2+) serves as cofactor.

The protein localises to the cytoplasm. The enzyme catalyses DNA(n) + a 2'-deoxyribonucleoside 5'-triphosphate = DNA(n+1) + diphosphate. Poorly processive, error-prone DNA polymerase involved in untargeted mutagenesis. Copies undamaged DNA at stalled replication forks, which arise in vivo from mismatched or misaligned primer ends. These misaligned primers can be extended by PolIV. Exhibits no 3'-5' exonuclease (proofreading) activity. May be involved in translesional synthesis, in conjunction with the beta clamp from PolIII. The protein is DNA polymerase IV of Legionella pneumophila subsp. pneumophila (strain Philadelphia 1 / ATCC 33152 / DSM 7513).